Here is a 136-residue protein sequence, read N- to C-terminus: ATP synthase epsilon chain (136 aa).

The tract at residues 100-120 (QGALEEANRGEDKPNQLKASN) is disordered. The segment covering 105–114 (EANRGEDKPN) has biased composition (basic and acidic residues).

Belongs to the ATPase epsilon chain family. In terms of assembly, F-type ATPases have 2 components, CF(1) - the catalytic core - and CF(0) - the membrane proton channel. CF(1) has five subunits: alpha(3), beta(3), gamma(1), delta(1), epsilon(1). CF(0) has three main subunits: a, b and c.

The protein localises to the cellular thylakoid membrane. Its function is as follows. Produces ATP from ADP in the presence of a proton gradient across the membrane. The chain is ATP synthase epsilon chain (atpC) from Synechocystis sp. (strain ATCC 27184 / PCC 6803 / Kazusa).